Reading from the N-terminus, the 707-residue chain is Solute carrier family 15 member 1 (707 aa).

The chain crosses the membrane as a helical span at residues M1–V21. The Extracellular segment spans residues N22 to T53. Residue N50 is glycosylated (N-linked (GlcNAc...) asparagine). A helical membrane pass occupies residues V54–A74. Residues D75–K82 are Cytoplasmic-facing. A helical transmembrane segment spans residues T83 to V103. Topologically, residues N104–L118 are extracellular. A helical membrane pass occupies residues P119–I139. Residues K140–R161 lie on the Cytoplasmic side of the membrane. A helical transmembrane segment spans residues F162–P182. The Extracellular segment spans residues M183–Y198. Residues P199–G219 form a helical membrane-spanning segment. Topologically, residues S220 to Q276 are cytoplasmic. A helical transmembrane segment spans residues I277 to F297. Over D298–T327 the chain is Extracellular. Residues V328 to I348 traverse the membrane as a helical segment. Over A349 to M361 the chain is Cytoplasmic. The chain crosses the membrane as a helical span at residues T362 to I382. Residues D383–Q583 are Extracellular-facing. The tract at residues D383–Q583 is extracellular domain (ECD). N439, N498, and N513 each carry an N-linked (GlcNAc...) asparagine glycan. The chain crosses the membrane as a helical span at residues I584 to F604. Over S605–Q618 the chain is Cytoplasmic. Residues A619 to G639 traverse the membrane as a helical segment. At Q640–Q644 the chain is on the extracellular side. A helical transmembrane segment spans residues W645–M665. Topologically, residues A666–M707 are cytoplasmic. Positions E682–M707 are disordered. Positions D684–D694 are enriched in basic and acidic residues.

This sequence belongs to the major facilitator superfamily. Proton-dependent oligopeptide transporter (POT/PTR) (TC 2.A.17) family. Interacts (via extracellular domain region) with trypsin. Intestine, kidney, liver and low in brain.

The protein resides in the apical cell membrane. It carries out the reaction a dipeptide(out) + H(+)(out) = a dipeptide(in) + H(+)(in). It catalyses the reaction an L-amino acid tripeptide(out) + H(+)(out) = an L-amino acid tripeptide(in) + H(+)(in). The catalysed reaction is L-alanyl-L-lysine(out) + H(+)(out) = L-alanyl-L-lysine(in) + H(+)(in). The enzyme catalyses L-alanyl-L-proline(out) + H(+)(out) = L-alanyl-L-proline(in) + H(+)(in). It carries out the reaction L-alanyl-L-valine(out) + H(+)(out) = L-alanyl-L-valine(in) + H(+)(in). It catalyses the reaction carnosine(out) + H(+)(out) = carnosine(in) + H(+)(in). The catalysed reaction is glycyl-L-glutamine(out) + H(+)(out) = glycyl-L-glutamine(in) + H(+)(in). The enzyme catalyses glycyl-L-leucine(out) + H(+)(out) = glycyl-L-leucine(in) + H(+)(in). It carries out the reaction glycyl-L-proline(out) + H(+)(out) = glycyl-L-proline(in) + H(+)(in). It catalyses the reaction glycyl-sarcosine(out) + H(+)(out) = glycyl-sarcosine(in) + H(+)(in). The catalysed reaction is L-leucyl-L-leucine(out) + H(+)(out) = L-leucyl-L-leucine(in) + H(+)(in). The enzyme catalyses L-leucyl-L-proline(out) + H(+)(out) = L-leucyl-L-proline(in) + H(+)(in). It carries out the reaction L-phenylalanyl-L-leucine(out) + H(+)(out) = L-phenylalanyl-L-leucine(in) + H(+)(in). It catalyses the reaction L-phenylalanyl-L-phenylalanine(out) + H(+)(out) = L-phenylalanyl-L-phenylalanine(in) + H(+)(in). The catalysed reaction is L-lysyl-glycine(out) + H(+)(out) = L-lysyl-glycine(in) + H(+)(in). The enzyme catalyses L-tyrosylglycine(out) + H(+)(out) = L-tyrosylglycine(in) + H(+)(in). It carries out the reaction L-alanyl-L-aspartate(out) + 2 H(+)(out) = L-alanyl-L-aspartate(in) + 2 H(+)(in). It catalyses the reaction L-aspartyl-glycine(out) + 2 H(+)(out) = L-aspartyl-glycine(in) + 2 H(+)(in). The catalysed reaction is glycyl-L-aspartate(out) + 2 H(+)(out) = glycyl-L-aspartate(in) + 2 H(+)(in). The enzyme catalyses glycyl-L-glutamate(out) + 2 H(+)(out) = glycyl-L-glutamate(in) + 2 H(+)(in). It carries out the reaction L-alanyl-L-leucyl-L-alanine(out) + H(+)(out) = L-alanyl-L-leucyl-L-alanine(in) + H(+)(in). It catalyses the reaction L-alanyl-L-prolylglycine(out) + H(+)(out) = L-alanyl-L-prolylglycine(in) + H(+)(in). The catalysed reaction is glycylglycyl-L-isoleucine(out) + H(+)(out) = glycylglycyl-L-isoleucine(in) + H(+)(in). The enzyme catalyses glycylglycyl-L-proline(out) + H(+)(out) = glycylglycyl-L-proline(in) + H(+)(in). It carries out the reaction L-methionyl-L-phenylalanyl-L-methionine(out) + H(+)(out) = L-methionyl-L-phenylalanyl-L-methionine(in) + H(+)(in). It catalyses the reaction N-acetyl-D-muramoyl-L-alanyl-D-isoglutamine(out) + 2 H(+)(out) = N-acetyl-D-muramoyl-L-alanyl-D-isoglutamine(in) + 2 H(+)(in). The catalysed reaction is N(alpha)-formyl-L-methionyl-L-leucyl-L-phenylalanine(out) + 2 H(+)(out) = N(alpha)-formyl-L-methionyl-L-leucyl-L-phenylalanine(in) + 2 H(+)(in). Electrogenic proton-coupled amino-acid transporter that transports oligopeptides of 2 to 4 amino acids with a preference for dipeptides. Transports neutral and monovalently charged peptides with a proton to peptide stoichiometry of 1:1 or 2:1. Primarily responsible for the absorption of dietary di- and tripeptides from the small intestinal lumen. Mediates transepithelial transport of muramyl and N-formylated bacterial dipeptides contributing to recognition of pathogenic bacteria by the mucosal immune system. The chain is Solute carrier family 15 member 1 (SLC15A1) from Oryctolagus cuniculus (Rabbit).